An 802-amino-acid polypeptide reads, in one-letter code: Phenylalanine--tRNA ligase beta subunit (802 aa).

Residues 40 to 155 (SASLKNVVVG…EHVETGVSAI (116 aa)) form the tRNA-binding domain. One can recognise a B5 domain in the interval 409–484 (KAVNKIETSL…RIYGYDEIPV (76 aa)). Residues aspartate 462, aspartate 468, glutamate 471, and glutamate 472 each contribute to the Mg(2+) site. The region spanning 709–802 (PRYPEMTRDL…LQAKLHAIIR (94 aa)) is the FDX-ACB domain.

This sequence belongs to the phenylalanyl-tRNA synthetase beta subunit family. Type 1 subfamily. As to quaternary structure, tetramer of two alpha and two beta subunits. Requires Mg(2+) as cofactor.

It is found in the cytoplasm. The catalysed reaction is tRNA(Phe) + L-phenylalanine + ATP = L-phenylalanyl-tRNA(Phe) + AMP + diphosphate + H(+). This Listeria innocua serovar 6a (strain ATCC BAA-680 / CLIP 11262) protein is Phenylalanine--tRNA ligase beta subunit.